The sequence spans 97 residues: Aspartyl/glutamyl-tRNA(Asn/Gln) amidotransferase subunit C (97 aa).

This sequence belongs to the GatC family. In terms of assembly, heterotrimer of A, B and C subunits.

It carries out the reaction L-glutamyl-tRNA(Gln) + L-glutamine + ATP + H2O = L-glutaminyl-tRNA(Gln) + L-glutamate + ADP + phosphate + H(+). The enzyme catalyses L-aspartyl-tRNA(Asn) + L-glutamine + ATP + H2O = L-asparaginyl-tRNA(Asn) + L-glutamate + ADP + phosphate + 2 H(+). Functionally, allows the formation of correctly charged Asn-tRNA(Asn) or Gln-tRNA(Gln) through the transamidation of misacylated Asp-tRNA(Asn) or Glu-tRNA(Gln) in organisms which lack either or both of asparaginyl-tRNA or glutaminyl-tRNA synthetases. The reaction takes place in the presence of glutamine and ATP through an activated phospho-Asp-tRNA(Asn) or phospho-Glu-tRNA(Gln). The polypeptide is Aspartyl/glutamyl-tRNA(Asn/Gln) amidotransferase subunit C (Thermosynechococcus vestitus (strain NIES-2133 / IAM M-273 / BP-1)).